A 171-amino-acid chain; its full sequence is ATP synthase subunit b (171 aa).

A helical transmembrane segment spans residues 2-22 (FVVKMVLGFLILLSPLCATGL).

It belongs to the ATPase B chain family. F-type ATPases have 2 components, F(1) - the catalytic core - and F(0) - the membrane proton channel. F(1) has five subunits: alpha(3), beta(3), gamma(1), delta(1), epsilon(1). F(0) has three main subunits: a(1), b(2) and c(10-14). The alpha and beta chains form an alternating ring which encloses part of the gamma chain. F(1) is attached to F(0) by a central stalk formed by the gamma and epsilon chains, while a peripheral stalk is formed by the delta and b chains.

The protein localises to the cell inner membrane. Its function is as follows. F(1)F(0) ATP synthase produces ATP from ADP in the presence of a proton or sodium gradient. F-type ATPases consist of two structural domains, F(1) containing the extramembraneous catalytic core and F(0) containing the membrane proton channel, linked together by a central stalk and a peripheral stalk. During catalysis, ATP synthesis in the catalytic domain of F(1) is coupled via a rotary mechanism of the central stalk subunits to proton translocation. In terms of biological role, component of the F(0) channel, it forms part of the peripheral stalk, linking F(1) to F(0). The protein is ATP synthase subunit b of Helicobacter pylori (strain ATCC 700392 / 26695) (Campylobacter pylori).